The sequence spans 323 residues: Beta-ketoacyl-[acyl-carrier-protein] synthase III (323 aa).

Active-site residues include Cys-114 and His-250. An ACP-binding region spans residues 251 to 255; that stretch reads QANLR. The active site involves Asn-280.

It belongs to the thiolase-like superfamily. FabH family. Homodimer.

The protein resides in the cytoplasm. The catalysed reaction is malonyl-[ACP] + acetyl-CoA + H(+) = 3-oxobutanoyl-[ACP] + CO2 + CoA. It functions in the pathway lipid metabolism; fatty acid biosynthesis. In terms of biological role, catalyzes the condensation reaction of fatty acid synthesis by the addition to an acyl acceptor of two carbons from malonyl-ACP. Catalyzes the first condensation reaction which initiates fatty acid synthesis and may therefore play a role in governing the total rate of fatty acid production. Possesses both acetoacetyl-ACP synthase and acetyl transacylase activities. Its substrate specificity determines the biosynthesis of branched-chain and/or straight-chain of fatty acids. In Cereibacter sphaeroides (strain ATCC 17025 / ATH 2.4.3) (Rhodobacter sphaeroides), this protein is Beta-ketoacyl-[acyl-carrier-protein] synthase III.